The primary structure comprises 51 residues: Large ribosomal subunit protein eL39 (51 aa).

The tract at residues 1-22 (MPSQKSFRTKQKLAKAQKQNRP) is disordered.

This sequence belongs to the eukaryotic ribosomal protein eL39 family. Interacts with YIH1.

The polypeptide is Large ribosomal subunit protein eL39 (RPL39) (Debaryomyces hansenii (strain ATCC 36239 / CBS 767 / BCRC 21394 / JCM 1990 / NBRC 0083 / IGC 2968) (Yeast)).